The sequence spans 229 residues: Large ribosomal subunit protein uL3 (229 aa).

An N5-methylglutamine modification is found at Gln151.

Belongs to the universal ribosomal protein uL3 family. Part of the 50S ribosomal subunit. Forms a cluster with proteins L14 and L19. Post-translationally, methylated by PrmB.

In terms of biological role, one of the primary rRNA binding proteins, it binds directly near the 3'-end of the 23S rRNA, where it nucleates assembly of the 50S subunit. In Paramagnetospirillum magneticum (strain ATCC 700264 / AMB-1) (Magnetospirillum magneticum), this protein is Large ribosomal subunit protein uL3.